The chain runs to 331 residues: DNA-directed RNA polymerase subunit alpha (331 aa).

The alpha N-terminal domain (alpha-NTD) stretch occupies residues M1–E232. An alpha C-terminal domain (alpha-CTD) region spans residues V247–G331.

This sequence belongs to the RNA polymerase alpha chain family. Homodimer. The RNAP catalytic core consists of 2 alpha, 1 beta, 1 beta' and 1 omega subunit. When a sigma factor is associated with the core the holoenzyme is formed, which can initiate transcription.

It catalyses the reaction RNA(n) + a ribonucleoside 5'-triphosphate = RNA(n+1) + diphosphate. Functionally, DNA-dependent RNA polymerase catalyzes the transcription of DNA into RNA using the four ribonucleoside triphosphates as substrates. This Alkalilimnicola ehrlichii (strain ATCC BAA-1101 / DSM 17681 / MLHE-1) protein is DNA-directed RNA polymerase subunit alpha.